The primary structure comprises 317 residues: Acetyl-coenzyme A carboxylase carboxyl transferase subunit alpha (317 aa).

Residues 31 to 292 (RFEPELAQLE…DKALWATLTS (262 aa)) form the CoA carboxyltransferase C-terminal domain.

The protein belongs to the AccA family. In terms of assembly, acetyl-CoA carboxylase is a heterohexamer composed of biotin carboxyl carrier protein (AccB), biotin carboxylase (AccC) and two subunits each of ACCase subunit alpha (AccA) and ACCase subunit beta (AccD).

It localises to the cytoplasm. The enzyme catalyses N(6)-carboxybiotinyl-L-lysyl-[protein] + acetyl-CoA = N(6)-biotinyl-L-lysyl-[protein] + malonyl-CoA. Its pathway is lipid metabolism; malonyl-CoA biosynthesis; malonyl-CoA from acetyl-CoA: step 1/1. Functionally, component of the acetyl coenzyme A carboxylase (ACC) complex. First, biotin carboxylase catalyzes the carboxylation of biotin on its carrier protein (BCCP) and then the CO(2) group is transferred by the carboxyltransferase to acetyl-CoA to form malonyl-CoA. The sequence is that of Acetyl-coenzyme A carboxylase carboxyl transferase subunit alpha from Sorangium cellulosum (strain So ce56) (Polyangium cellulosum (strain So ce56)).